The chain runs to 248 residues: 5'-nucleotidase SurE (248 aa).

Residues Asp-8, Asp-9, Ser-39, and Asn-91 each contribute to the a divalent metal cation site.

It belongs to the SurE nucleotidase family. A divalent metal cation serves as cofactor.

The protein resides in the cytoplasm. It carries out the reaction a ribonucleoside 5'-phosphate + H2O = a ribonucleoside + phosphate. Its function is as follows. Nucleotidase that shows phosphatase activity on nucleoside 5'-monophosphates. The chain is 5'-nucleotidase SurE from Neisseria meningitidis serogroup C (strain 053442).